The chain runs to 416 residues: Cyclin-L1-1 (416 aa).

The disordered stretch occupies residues 286–416 (KCTAGSANND…DSSKDRRRHH (131 aa)). 4 stretches are compositionally biased toward basic and acidic residues: residues 304-315 (PHEKATDSKKSG), 328-374 (SYER…DKLK), 384-393 (RLKDSGGHSD), and 401-410 (RDRDYRDSSK).

It belongs to the cyclin family. Cyclin L subfamily. Forms a complex with CDKG1. Interacts with MOS4 and associates with the spliceosome.

Its subcellular location is the nucleus. Cognate cyclin for CDKG1. Required for synapsis and male meiosis, and for the proper splicing of specific resistance (R) genes. Involved in regulation of DNA methylation and transcriptional silencing. The chain is Cyclin-L1-1 (CYCL1-1) from Arabidopsis thaliana (Mouse-ear cress).